The chain runs to 328 residues: Glycerol-3-phosphate dehydrogenase [NAD(P)+] (328 aa).

3 residues coordinate NADPH: W11, R30, and K103. 3 residues coordinate sn-glycerol 3-phosphate: K103, G132, and S134. NADPH is bound at residue A136. 5 residues coordinate sn-glycerol 3-phosphate: K187, D240, S250, R251, and N252. K187 serves as the catalytic Proton acceptor. An NADPH-binding site is contributed by R251. NADPH-binding residues include V275 and E277.

The protein belongs to the NAD-dependent glycerol-3-phosphate dehydrogenase family.

The protein resides in the cytoplasm. It catalyses the reaction sn-glycerol 3-phosphate + NAD(+) = dihydroxyacetone phosphate + NADH + H(+). The enzyme catalyses sn-glycerol 3-phosphate + NADP(+) = dihydroxyacetone phosphate + NADPH + H(+). It functions in the pathway membrane lipid metabolism; glycerophospholipid metabolism. Catalyzes the reduction of the glycolytic intermediate dihydroxyacetone phosphate (DHAP) to sn-glycerol 3-phosphate (G3P), the key precursor for phospholipid synthesis. The protein is Glycerol-3-phosphate dehydrogenase [NAD(P)+] of Aromatoleum aromaticum (strain DSM 19018 / LMG 30748 / EbN1) (Azoarcus sp. (strain EbN1)).